Consider the following 548-residue polypeptide: CTP synthase (548 aa).

Residues 1–276 (MPTELTDYDP…DQYVMEQLGL (276 aa)) are amidoligase domain. Residue Ser-25 participates in CTP binding. Position 25 (Ser-25) interacts with UTP. 26 to 31 (GLGKGI) serves as a coordination point for ATP. Tyr-66 is a binding site for L-glutamine. Residue Asp-83 participates in ATP binding. Asp-83 and Glu-151 together coordinate Mg(2+). CTP contacts are provided by residues 158–160 (DIE), 197–202 (KTKPTQ), and Lys-233. UTP is bound by residues 197 to 202 (KTKPTQ) and Lys-233. In terms of domain architecture, Glutamine amidotransferase type-1 spans 303 to 541 (DIALVGKYAM…VETILETTDT (239 aa)). Gly-363 is a binding site for L-glutamine. The active-site Nucleophile; for glutamine hydrolysis is Cys-390. Residues 391-394 (LGFQ), Glu-414, and Arg-471 each bind L-glutamine. Residues His-514 and Glu-516 contribute to the active site.

Belongs to the CTP synthase family. As to quaternary structure, homotetramer.

It carries out the reaction UTP + L-glutamine + ATP + H2O = CTP + L-glutamate + ADP + phosphate + 2 H(+). The enzyme catalyses L-glutamine + H2O = L-glutamate + NH4(+). The catalysed reaction is UTP + NH4(+) + ATP = CTP + ADP + phosphate + 2 H(+). Its pathway is pyrimidine metabolism; CTP biosynthesis via de novo pathway; CTP from UDP: step 2/2. Allosterically activated by GTP, when glutamine is the substrate; GTP has no effect on the reaction when ammonia is the substrate. The allosteric effector GTP functions by stabilizing the protein conformation that binds the tetrahedral intermediate(s) formed during glutamine hydrolysis. Inhibited by the product CTP, via allosteric rather than competitive inhibition. In terms of biological role, catalyzes the ATP-dependent amination of UTP to CTP with either L-glutamine or ammonia as the source of nitrogen. Regulates intracellular CTP levels through interactions with the four ribonucleotide triphosphates. This Natronomonas pharaonis (strain ATCC 35678 / DSM 2160 / CIP 103997 / JCM 8858 / NBRC 14720 / NCIMB 2260 / Gabara) (Halobacterium pharaonis) protein is CTP synthase.